The chain runs to 295 residues: Pyrroline-5-carboxylate reductase (295 aa).

Belongs to the pyrroline-5-carboxylate reductase family.

The protein localises to the cytoplasm. It carries out the reaction L-proline + NADP(+) = (S)-1-pyrroline-5-carboxylate + NADPH + 2 H(+). The catalysed reaction is L-proline + NAD(+) = (S)-1-pyrroline-5-carboxylate + NADH + 2 H(+). It functions in the pathway amino-acid biosynthesis; L-proline biosynthesis; L-proline from L-glutamate 5-semialdehyde: step 1/1. Functionally, catalyzes the reduction of 1-pyrroline-5-carboxylate (PCA) to L-proline. This is Pyrroline-5-carboxylate reductase from Mycobacterium tuberculosis (strain CDC 1551 / Oshkosh).